The following is a 113-amino-acid chain: Ig heavy chain V-III region A4 (113 aa).

The region spanning 1–113 (EVKLEESGGG…YWGQGTLVTV (113 aa)) is the Ig-like domain. C22 and C98 are joined by a disulfide.

The sequence is that of Ig heavy chain V-III region A4 from Mus musculus (Mouse).